A 160-amino-acid polypeptide reads, in one-letter code: Inner membrane protein YcdZ (160 aa).

5 helical membrane-spanning segments follow: residues 20-42 (WGAV…YFAC), 50-70 (LLIS…IIHG), 72-92 (ALAP…AFLM), 99-119 (LLLS…AGQG), and 123-143 (LVLP…NSGL).

The protein to E.coli YahC.

The protein localises to the cell inner membrane. This Salmonella typhimurium (strain LT2 / SGSC1412 / ATCC 700720) protein is Inner membrane protein YcdZ (ycdZ).